The primary structure comprises 258 residues: MAPVVTVPENASPELVEKAKNLASVWQLNFDGNVRHGLVLMQSEAHLALKQLDEPKVGEVLVDFASDALTFRRLHGGGKKEAVAKAVGLKGQSEWRVLDATAGLGRDAFVLASLGCRVDMIERSPVVAALLADGLERAHHSAELSAWLPQRMRLHHGIAVDLMANWCNEPANLAPDVVYLDPMFPHRKKSAAVKKEMRLFQQLLGPDEDADGLLAPALALAKKRVVVKRPAGAPFLAQQKPHIEMQGKANRFDVYLIN.

S-adenosyl-L-methionine is bound by residues 106-107 (RD), 122-123 (ER), and Asp-181.

It belongs to the methyltransferase superfamily. RsmJ family.

The protein localises to the cytoplasm. It carries out the reaction guanosine(1516) in 16S rRNA + S-adenosyl-L-methionine = N(2)-methylguanosine(1516) in 16S rRNA + S-adenosyl-L-homocysteine + H(+). Its function is as follows. Specifically methylates the guanosine in position 1516 of 16S rRNA. This Pseudoalteromonas atlantica (strain T6c / ATCC BAA-1087) protein is Ribosomal RNA small subunit methyltransferase J.